The chain runs to 186 residues: Large ribosomal subunit protein bL17 (186 aa).

The interval 123–186 (SEADRARRVK…ADEAEGSSED (64 aa)) is disordered. Residues 139–177 (EAAAAAPQAAVEPEAVEAAPAPDAPEAAPEAEAAAPQPA) are compositionally biased toward low complexity.

The protein belongs to the bacterial ribosomal protein bL17 family. As to quaternary structure, part of the 50S ribosomal subunit. Contacts protein L32.

This chain is Large ribosomal subunit protein bL17, found in Mycobacterium avium (strain 104).